We begin with the raw amino-acid sequence, 417 residues long: Gamma-glutamyl phosphate reductase (417 aa).

This sequence belongs to the gamma-glutamyl phosphate reductase family.

It is found in the cytoplasm. It catalyses the reaction L-glutamate 5-semialdehyde + phosphate + NADP(+) = L-glutamyl 5-phosphate + NADPH + H(+). The protein operates within amino-acid biosynthesis; L-proline biosynthesis; L-glutamate 5-semialdehyde from L-glutamate: step 2/2. Functionally, catalyzes the NADPH-dependent reduction of L-glutamate 5-phosphate into L-glutamate 5-semialdehyde and phosphate. The product spontaneously undergoes cyclization to form 1-pyrroline-5-carboxylate. This is Gamma-glutamyl phosphate reductase from Serratia marcescens.